A 468-amino-acid chain; its full sequence is Uronate isomerase (468 aa).

The protein belongs to the metallo-dependent hydrolases superfamily. Uronate isomerase family.

The catalysed reaction is D-glucuronate = D-fructuronate. It carries out the reaction aldehydo-D-galacturonate = keto-D-tagaturonate. Its pathway is carbohydrate metabolism; pentose and glucuronate interconversion. The protein is Uronate isomerase of Lachnospira eligens (strain ATCC 27750 / DSM 3376 / VPI C15-48 / C15-B4) (Eubacterium eligens).